Consider the following 410-residue polypeptide: F-box/WD-40 repeat-containing protein 1 (410 aa).

Positions 32–79 constitute an F-box domain; that stretch reads SKECSLLPFELFEEILCRVPTKSLLRLKLTCKRWLALFNDKRFIYKHL. WD repeat units lie at residues 109–150 and 269–309; these read PNKF…VRWI and DVHN…NGVS.

The chain is F-box/WD-40 repeat-containing protein 1 (FBW1) from Arabidopsis thaliana (Mouse-ear cress).